The following is a 149-amino-acid chain: Protein AE7-like 2 (149 aa).

It belongs to the MIP18 family.

Its function is as follows. May play a role in chromosome segregation through establishment of sister chromatid cohesion. Unable to complement ae7 mutants, and thus probably not involved in the cytosolic iron-sulfur assembly (CIA) pathway. The polypeptide is Protein AE7-like 2 (Arabidopsis thaliana (Mouse-ear cress)).